The following is a 362-amino-acid chain: 5'-tyrosyl-DNA phosphodiesterase (362 aa).

Residues 1–10 (MSNSDDEIQE) are compositionally biased toward acidic residues. Positions 1 to 43 (MSNSDDEIQEIEAKRQKMSQEDSEVEIEILDEPEQGKLKNSSM) are disordered. Over residues 11 to 20 (IEAKRQKMSQ) the composition is skewed to basic and acidic residues. Residues 21–33 (EDSEVEIEILDEP) show a composition bias toward acidic residues. The tract at residues 126-130 (NIDGL) is interaction with 5' end of substrate DNA. Mg(2+) is bound by residues D128 and E158. Residues 232–237 (HLESTR) form an interaction with 5' end of substrate DNA region. Catalysis depends on D271, which acts as the Proton donor/acceptor. The interaction with 5' end of substrate DNA stretch occupies residues 273–275 (NLR).

Belongs to the CCR4/nocturin family. TTRAP/TDP2 subfamily. In terms of assembly, interacts with mxl-1; the interaction promotes axon regeneration after injury. Interacts with ets-4; the interaction is required for the sumoylation of ets-4. It depends on Mg(2+) as a cofactor. Mn(2+) is required as a cofactor.

The protein resides in the nucleus. It localises to the PML body. In terms of biological role, DNA repair enzyme that can remove a variety of covalent adducts from DNA through hydrolysis of a 5'-phosphodiester bond, giving rise to DNA with a free 5' phosphate. Catalyzes the hydrolysis of dead-end complexes between DNA and the topoisomerase 2 (top2) active site tyrosine residue. Hydrolyzes 5'-phosphoglycolates on protruding 5' ends on DNA double-strand breaks (DSBs) due to DNA damage by radiation and free radicals. Inhibits axon regeneration after neuronal injury by promoting the sumoylation of ets-4, thereby inhibiting the phosphorylation of ets-4 required for probable interaction with cebp-1 and activation of svh-2 expression. This is 5'-tyrosyl-DNA phosphodiesterase from Caenorhabditis elegans.